Reading from the N-terminus, the 1360-residue chain is DNA-directed RNA polymerase subunit beta (1360 aa).

It belongs to the RNA polymerase beta chain family. As to quaternary structure, the RNAP catalytic core consists of 2 alpha, 1 beta, 1 beta' and 1 omega subunit. When a sigma factor is associated with the core the holoenzyme is formed, which can initiate transcription.

It catalyses the reaction RNA(n) + a ribonucleoside 5'-triphosphate = RNA(n+1) + diphosphate. DNA-dependent RNA polymerase catalyzes the transcription of DNA into RNA using the four ribonucleoside triphosphates as substrates. This is DNA-directed RNA polymerase subunit beta from Teredinibacter turnerae (strain ATCC 39867 / T7901).